The primary structure comprises 195 residues: UDP-N-acetylbacillosamine N-acetyltransferase (195 aa).

Substrate-binding positions include 13-15 (SGH), 35-36 (DD), and glycine 56. The active-site Proton acceptor is the histidine 125. Acetyl-CoA is bound by residues histidine 134, isoleucine 155, and glycine 173.

Belongs to the transferase hexapeptide repeat family. In terms of assembly, homotrimer.

The catalysed reaction is UDP-N-acetylbacillosamine + acetyl-CoA = UDP-N,N'-diacetylbacillosamine + CoA + H(+). It participates in protein modification; protein glycosylation. Acetyltransferase that modifies the UDP-4-amino-sugar to form UDP-N,N'-diacetylbacillosamine in the N-linked protein glycosylation pathway. This Campylobacter jejuni subsp. jejuni serotype O:2 (strain ATCC 700819 / NCTC 11168) protein is UDP-N-acetylbacillosamine N-acetyltransferase (pglD).